The chain runs to 462 residues: Hemopexin (462 aa).

The signal sequence occupies residues 1 to 23; sequence MARVLGAPVALGLWSLCWSLAIA. T24 and T29 each carry an O-linked (GalNAc...) threonine glycan. Positions 29 to 48 are disordered; sequence TSAHGNVAEGETKPDPDVTE. Residues 30-40 are O-glycosylated at one site; the sequence is SAHGNVAEGET. The segment covering 38–48 has biased composition (basic and acidic residues); sequence GETKPDPDVTE. Intrachain disulfides connect C50–C231, C149–C154, and C188–C200. Hemopexin repeat units follow at residues 53–93, 94–139, 140–184, and 185–231; these read GWSF…WKNF, PSPV…FPGI, PSPL…SWPA, and VGNC…FMPC. The N-linked (GlcNAc...) (complex) asparagine glycan is linked to N64. H79 is a heme binding site. H150 serves as a coordination point for heme. N187 is a glycosylation site (N-linked (GlcNAc...) (complex) asparagine). Heme is bound at residue H236. 2 N-linked (GlcNAc...) asparagine glycosylation sites follow: N240 and N246. Cystine bridges form between C257/C460, C366/C408, and C418/C435. 4 Hemopexin repeats span residues 259–304, 305–352, 357–396, and 400–450; these read PHLV…WPQG, PSAV…VGTP, LDSV…WTEL, and HEKV…ALPQ. Heme is bound at residue H293. N-linked (GlcNAc...) (complex) asparagine glycosylation occurs at N453.

Belongs to the hemopexin family. In terms of assembly, interacts with FLVCR1. (Microbial infection) Interacts with hepatitis E virus/HEV protein ORF3. In terms of processing, N- and O-glycosylated. O-glycosylated with core 1 or possibly core 8 glycans. O-glycosylation in the 30-40 region is minor compared to glycosylation at Thr-24 and Thr-29. In terms of tissue distribution, expressed by the liver and secreted in plasma.

It is found in the secreted. Its function is as follows. Binds heme and transports it to the liver for breakdown and iron recovery, after which the free hemopexin returns to the circulation. The polypeptide is Hemopexin (HPX) (Homo sapiens (Human)).